A 267-amino-acid polypeptide reads, in one-letter code: Small ribosomal subunit protein uS2 (267 aa).

The interval 232–267 (ATVREEEFADAPAEDAKPARRAPAKKAAADKGEAQA) is disordered. Positions 258–267 (AAADKGEAQA) are enriched in basic and acidic residues.

It belongs to the universal ribosomal protein uS2 family.

This chain is Small ribosomal subunit protein uS2, found in Stenotrophomonas maltophilia (strain R551-3).